The chain runs to 228 residues: Eukaryotic translation initiation factor 6 (228 aa).

Belongs to the eIF-6 family. As to quaternary structure, monomer. Associates with the 60S ribosomal subunit.

It is found in the cytoplasm. Its subcellular location is the nucleus. It localises to the nucleolus. Functionally, binds to the 60S ribosomal subunit and prevents its association with the 40S ribosomal subunit to form the 80S initiation complex in the cytoplasm. May also be involved in ribosome biogenesis. This is Eukaryotic translation initiation factor 6 from Guillardia theta (Cryptophyte).